The primary structure comprises 205 residues: ATP phosphoribosyltransferase (205 aa).

It belongs to the ATP phosphoribosyltransferase family. Short subfamily. As to quaternary structure, heteromultimer composed of HisG and HisZ subunits.

It localises to the cytoplasm. It catalyses the reaction 1-(5-phospho-beta-D-ribosyl)-ATP + diphosphate = 5-phospho-alpha-D-ribose 1-diphosphate + ATP. It functions in the pathway amino-acid biosynthesis; L-histidine biosynthesis; L-histidine from 5-phospho-alpha-D-ribose 1-diphosphate: step 1/9. Catalyzes the condensation of ATP and 5-phosphoribose 1-diphosphate to form N'-(5'-phosphoribosyl)-ATP (PR-ATP). Has a crucial role in the pathway because the rate of histidine biosynthesis seems to be controlled primarily by regulation of HisG enzymatic activity. The protein is ATP phosphoribosyltransferase of Leptospira interrogans serogroup Icterohaemorrhagiae serovar Lai (strain 56601).